A 240-amino-acid polypeptide reads, in one-letter code: uncharacterized protein (240 aa).

Residues 1–18 (MTRYTYLFILQIISCSFA) form the signal peptide. N-linked (GlcNAc...) asparagine glycosylation occurs at asparagine 127. The chain crosses the membrane as a helical span at residues 215–235 (GFISSSQLPQFVYLIVFTIIG).

It localises to the membrane. This is an uncharacterized protein from Caenorhabditis elegans.